A 572-amino-acid polypeptide reads, in one-letter code: Moesin (572 aa).

The 294-residue stretch at 1–294 (MPRGVAVRVT…GNHELYMRRR (294 aa)) folds into the FERM domain. Disordered stretches follow at residues 444–508 (SQER…SYLP) and 523–544 (LQAMKDESKGEDRYDKIHQENI). Residues 454 to 475 (AQEAAAAQHAAQLAAQREAQQL) show a composition bias toward low complexity. Over residues 480–502 (EGEEDEQDHELEVQQDDNDDLDD) the composition is skewed to acidic residues. Residues 525-544 (AMKDESKGEDRYDKIHQENI) are compositionally biased toward basic and acidic residues.

The protein localises to the cell membrane. It localises to the cytoplasm. Its subcellular location is the cytoskeleton. It is found in the cell projection. Functionally, probably involved in connections of major cytoskeletal structures to the plasma membrane. In Lytechinus variegatus (Green sea urchin), this protein is Moesin.